A 300-amino-acid polypeptide reads, in one-letter code: Ribosomal protein L11 methyltransferase (300 aa).

S-adenosyl-L-methionine is bound by residues Thr152, Gly173, Asp195, and Asn234.

It belongs to the methyltransferase superfamily. PrmA family.

It is found in the cytoplasm. It carries out the reaction L-lysyl-[protein] + 3 S-adenosyl-L-methionine = N(6),N(6),N(6)-trimethyl-L-lysyl-[protein] + 3 S-adenosyl-L-homocysteine + 3 H(+). Its function is as follows. Methylates ribosomal protein L11. This Burkholderia cenocepacia (strain ATCC BAA-245 / DSM 16553 / LMG 16656 / NCTC 13227 / J2315 / CF5610) (Burkholderia cepacia (strain J2315)) protein is Ribosomal protein L11 methyltransferase.